A 297-amino-acid polypeptide reads, in one-letter code: Acetylglutamate kinase (297 aa).

Substrate-binding positions include 72–73, Arg94, and Asn193; that span reads GG.

The protein belongs to the acetylglutamate kinase family. ArgB subfamily.

The protein resides in the cytoplasm. It carries out the reaction N-acetyl-L-glutamate + ATP = N-acetyl-L-glutamyl 5-phosphate + ADP. It functions in the pathway amino-acid biosynthesis; L-arginine biosynthesis; N(2)-acetyl-L-ornithine from L-glutamate: step 2/4. Its function is as follows. Catalyzes the ATP-dependent phosphorylation of N-acetyl-L-glutamate. This chain is Acetylglutamate kinase, found in Mycobacterium leprae (strain TN).